The chain runs to 175 residues: MSLDTAIFAGGCFWCMVQPFDTYPGIEKVESGYTGGHVANPTYEQVCSGTTGHTEAVKITFDPDKISYKDLVEIYWHQTDPTDASGQFQDRGDNYRPVIFVKNDEQRKIAEKSKKALQESGRFGDAKIVTTIEDVQPFYPAEDYHQGFYKKDPQRFALEEAGGRQQFIEKYWKNN.

The active site involves Cys12.

The protein belongs to the MsrA Met sulfoxide reductase family.

It carries out the reaction L-methionyl-[protein] + [thioredoxin]-disulfide + H2O = L-methionyl-(S)-S-oxide-[protein] + [thioredoxin]-dithiol. The catalysed reaction is [thioredoxin]-disulfide + L-methionine + H2O = L-methionine (S)-S-oxide + [thioredoxin]-dithiol. Its function is as follows. Has an important function as a repair enzyme for proteins that have been inactivated by oxidation. Catalyzes the reversible oxidation-reduction of methionine sulfoxide in proteins to methionine. This chain is Peptide methionine sulfoxide reductase MsrA, found in Limosilactobacillus reuteri (strain DSM 20016) (Lactobacillus reuteri).